A 393-amino-acid chain; its full sequence is Pyruvate dehydrogenase E1 component subunit alpha-2, mitochondrial (393 aa).

The N-terminal 28 residues, 1–28 (MALSRLSSRSNTFLKPAITALPSSIRRH), are a transit peptide targeting the mitochondrion. Residues H94, Y120, R121, G169, V171, D200, G201, A202, N229, and Y231 each contribute to the pyruvate site. Residues Y120, R121, G169, V171, D200, G201, A202, and N229 each contribute to the thiamine diphosphate site. D200 is a Mg(2+) binding site. Residues N229 and Y231 each contribute to the Mg(2+) site. Residue H295 participates in thiamine diphosphate binding.

As to quaternary structure, tetramer of 2 alpha and 2 beta subunits. Requires thiamine diphosphate as cofactor. It depends on Mg(2+) as a cofactor.

Its subcellular location is the mitochondrion matrix. The catalysed reaction is N(6)-[(R)-lipoyl]-L-lysyl-[protein] + pyruvate + H(+) = N(6)-[(R)-S(8)-acetyldihydrolipoyl]-L-lysyl-[protein] + CO2. E1 activity is regulated by phosphorylation (inactivation) and dephosphorylation (activation) of the alpha subunit. Its function is as follows. The pyruvate dehydrogenase complex catalyzes the overall conversion of pyruvate to acetyl-CoA and CO(2). It contains multiple copies of three enzymatic components: pyruvate dehydrogenase (E1), dihydrolipoamide acetyltransferase (E2) and lipoamide dehydrogenase (E3). In Arabidopsis thaliana (Mouse-ear cress), this protein is Pyruvate dehydrogenase E1 component subunit alpha-2, mitochondrial (IAR4).